The sequence spans 956 residues: Zinc protease PQQL-like (956 aa).

An N-acetylmethionine modification is found at M1. A Zn(2+)-binding site is contributed by H85. Residue E88 is the Proton acceptor of the active site. Residue H89 participates in Zn(2+) binding. The active site involves E165. E172 is a binding site for Zn(2+).

Belongs to the peptidase M16 family. Zn(2+) is required as a cofactor.

The protein is Zinc protease PQQL-like of Arabidopsis thaliana (Mouse-ear cress).